The primary structure comprises 135 residues: Large ribosomal subunit protein uL16c (135 aa).

Belongs to the universal ribosomal protein uL16 family. As to quaternary structure, part of the 50S ribosomal subunit.

The protein localises to the plastid. It localises to the chloroplast. The protein is Large ribosomal subunit protein uL16c of Lactuca sativa (Garden lettuce).